Here is a 96-residue protein sequence, read N- to C-terminus: UPF0298 protein LCA_1075 (96 aa).

Belongs to the UPF0298 family.

Its subcellular location is the cytoplasm. In Latilactobacillus sakei subsp. sakei (strain 23K) (Lactobacillus sakei subsp. sakei), this protein is UPF0298 protein LCA_1075.